Consider the following 361-residue polypeptide: Chorismate synthase (361 aa).

Residues 37–59 are disordered; that stretch reads TEEDLQHDLDRRRPGTSRYTTPR. A compositionally biased stretch (basic and acidic residues) spans 40-49; sequence DLQHDLDRRR. Residues Arg48 and Arg54 each coordinate NADP(+). Residues 125–127, 238–239, Gly278, 293–297, and Arg319 each bind FMN; these read RSS, NA, and KPTSS.

This sequence belongs to the chorismate synthase family. Homotetramer. FMNH2 is required as a cofactor.

It carries out the reaction 5-O-(1-carboxyvinyl)-3-phosphoshikimate = chorismate + phosphate. It participates in metabolic intermediate biosynthesis; chorismate biosynthesis; chorismate from D-erythrose 4-phosphate and phosphoenolpyruvate: step 7/7. Catalyzes the anti-1,4-elimination of the C-3 phosphate and the C-6 proR hydrogen from 5-enolpyruvylshikimate-3-phosphate (EPSP) to yield chorismate, which is the branch point compound that serves as the starting substrate for the three terminal pathways of aromatic amino acid biosynthesis. This reaction introduces a second double bond into the aromatic ring system. The protein is Chorismate synthase of Erwinia tasmaniensis (strain DSM 17950 / CFBP 7177 / CIP 109463 / NCPPB 4357 / Et1/99).